Reading from the N-terminus, the 280-residue chain is MKIIETIEEMKKFSEEMREKKKTIGFVPTMGYLHEGHLSLVRRARDENDVVVVSIFVNPTQFGPNEDYERYPRDFERDRKLLEKENVDCIFHPSVEEMYPPDFSTYVEETKLSKHLCGRSRPGHFRGVCTVVTKLFNIVKPHRAYFGQKDAQQFRVLRRMVRDLNMDVEMIECPIVREPDGLAMSSRNVYLSPEERQQALSLYQSLKIAENLYLNGERDAEKIKEEMIKHLSRFDKVKIDYVEIVDEETLEPVEKIDRKVIVAVAAWVGNARLIDNTILG.

An ATP-binding site is contributed by 30–37 (MGYLHEGH). H37 (proton donor) is an active-site residue. Q61 contributes to the (R)-pantoate binding site. Position 61 (Q61) interacts with beta-alanine. 147 to 150 (GQKD) contacts ATP. Residue Q153 participates in (R)-pantoate binding. Residues V176 and 184–187 (MSSR) contribute to the ATP site.

It belongs to the pantothenate synthetase family. Homodimer.

Its subcellular location is the cytoplasm. The enzyme catalyses (R)-pantoate + beta-alanine + ATP = (R)-pantothenate + AMP + diphosphate + H(+). Its pathway is cofactor biosynthesis; (R)-pantothenate biosynthesis; (R)-pantothenate from (R)-pantoate and beta-alanine: step 1/1. Functionally, catalyzes the condensation of pantoate with beta-alanine in an ATP-dependent reaction via a pantoyl-adenylate intermediate. This is Pantothenate synthetase from Thermotoga petrophila (strain ATCC BAA-488 / DSM 13995 / JCM 10881 / RKU-1).